We begin with the raw amino-acid sequence, 208 residues long: ATP synthase subunit beta, chloroplastic (208 aa).

This sequence belongs to the ATPase alpha/beta chains family. F-type ATPases have 2 components, CF(1) - the catalytic core - and CF(0) - the membrane proton channel. CF(1) has five subunits: alpha(3), beta(3), gamma(1), delta(1), epsilon(1). CF(0) has four main subunits: a(1), b(1), b'(1) and c(9-12).

It is found in the plastid. It localises to the chloroplast thylakoid membrane. The catalysed reaction is ATP + H2O + 4 H(+)(in) = ADP + phosphate + 5 H(+)(out). In terms of biological role, produces ATP from ADP in the presence of a proton gradient across the membrane. The catalytic sites are hosted primarily by the beta subunits. The sequence is that of ATP synthase subunit beta, chloroplastic (atpB) from Hypolepis hostilis (Fern).